We begin with the raw amino-acid sequence, 431 residues long: Dihydroorotase (431 aa).

The Zn(2+) site is built by His-55 and His-57. Substrate contacts are provided by residues 57-59 and Asn-89; that span reads HFR. Residues Lys-139, His-169, His-223, and Asp-290 each contribute to the Zn(2+) site. Lys-139 carries the post-translational modification N6-carboxylysine. Asp-290 is an active-site residue. Substrate contacts are provided by residues His-294 and 308–309; that span reads PG.

The protein belongs to the metallo-dependent hydrolases superfamily. DHOase family. Class I DHOase subfamily. Zn(2+) is required as a cofactor.

The catalysed reaction is (S)-dihydroorotate + H2O = N-carbamoyl-L-aspartate + H(+). The protein operates within pyrimidine metabolism; UMP biosynthesis via de novo pathway; (S)-dihydroorotate from bicarbonate: step 3/3. Catalyzes the reversible cyclization of carbamoyl aspartate to dihydroorotate. The sequence is that of Dihydroorotase from Methanothermobacter thermautotrophicus (strain ATCC 29096 / DSM 1053 / JCM 10044 / NBRC 100330 / Delta H) (Methanobacterium thermoautotrophicum).